A 492-amino-acid chain; its full sequence is GTPase Der (492 aa).

In terms of domain architecture, EngA-type G 1 spans 3-166 (PVIALVGRPN…AVLGIFPKDA (164 aa)). GTP-binding positions include 9 to 16 (GRPNVGKS), 56 to 60 (DTGGI), and 118 to 121 (NKVD). Residues 166–190 (AGEPEEGAEAEEEVQEGQEAKRIPG) form a disordered region. The segment covering 168-181 (EPEEGAEAEEEVQE) has biased composition (acidic residues). Residues 197-370 (IKLAIIGRPN…SVQAAFHSAV (174 aa)) form the EngA-type G 2 domain. Residues 203–210 (GRPNVGKS), 250–254 (DTAGV), and 315–318 (NKWD) each bind GTP. A KH-like domain is found at 371–455 (TRWPTSRLTQ…PIRIEYKGGE (85 aa)). The interval 453–492 (GGENPYEGNKNKLTDRQVNKKRRLMSHHKKAEKKRKDKRK) is disordered. A compositionally biased stretch (basic and acidic residues) spans 461–470 (NKNKLTDRQV). The segment covering 471–492 (NKKRRLMSHHKKAEKKRKDKRK) has biased composition (basic residues).

It belongs to the TRAFAC class TrmE-Era-EngA-EngB-Septin-like GTPase superfamily. EngA (Der) GTPase family. Associates with the 50S ribosomal subunit.

Functionally, GTPase that plays an essential role in the late steps of ribosome biogenesis. In Ectopseudomonas mendocina (strain ymp) (Pseudomonas mendocina), this protein is GTPase Der.